A 512-amino-acid chain; its full sequence is Glycosyltransferase sdnJ (512 aa).

The signal sequence occupies residues 1–24; sequence MHAKRPSVLFFTISDFGYVNVVLA. A glycan (N-linked (GlcNAc...) asparagine) is linked at asparagine 207.

Belongs to the UDP-glycosyltransferase family.

It catalyses the reaction sordaricin + GDP-6-deoxy-alpha-D-altrose = 4'-O-demethylsordarin + GDP + H(+). The protein operates within antibiotic biosynthesis. Glycosyltransferase; part of the gene cluster that mediates the biosynthesis of sordarin and hypoxysordarin, glycoside antibiotics with a unique tetracyclic diterpene aglycone structure. First, the geranylgeranyl diphosphate synthase sdnC constructs GGDP from farnesyl diphosphate and isopentenyl diphosphate. The diterpene cyclase sdnA then catalyzes the cyclization of GGDP to afford cycloaraneosene. Cycloaraneosene is then hydroxylated four times by the putative cytochrome P450 monooxygenases sdnB, sdnE, sdnF and sdnH to give a hydroxylated cycloaraneosene derivative such as cycloaraneosene-8,9,13,19-tetraol. Although the order of the hydroxylations is unclear, at least C8, C9 and C13 of the cycloaraneosene skeleton are hydroxylated before the sordaricin formation. Dehydration of the 13-hydroxy group of the hydroxylated cycloaraneosene derivative might be catalyzed by an unassigned hypothetical protein such as sdnG and sdnP to construct the cyclopentadiene moiety. The FAD-dependent oxidoreductase sdnN is proposed to catalyze the oxidation at C9 of the hydroxylated cycloaraneosene derivative and also catalyze the Baeyer-Villiger oxidation to give the lactone intermediate. The presumed lactone intermediate would be hydrolyzed to give an acrolein moiety and a carboxylate moiety. Then, [4+2]cycloaddition would occur between the acrolein moiety and the cyclopentadiene moiety to give sordaricin. SdnN might also be involved in the [4+2]cycloaddition after the hypothesized oxidation to accommodate the oxidized product and prompt the [4+2]cycloaddition. GDP-6-deoxy-D-altrose may be biosynthesized from GDP-D-mannose by the putative GDP-mannose-4,6-dehydratase sdnI and the short-chain dehydrogenase sdnK. The glycosyltransferase sdnJ catalyzes the attachment of 6-deoxy-D-altrose onto the 19-hydroxy group of sordaricin to give 4'-O-demethylsordarin. The methyltransferase sdnD would complete the biosynthesis of sordarin. Sordarin can be further modified into hypoxysordarin. The unique acyl chain at the 3'-hydroxy group of hypoxysordarin would be constructed by an iterative type I PKS sdnO and the trans-acting polyketide methyltransferase sdnL. SdnL would be responsible for the introduction of an alpha-methyl group of the polyketide chain. Alternatively, the beta-lactamase-like protein sdnR might be responsible for the cleavage and transfer of the polyketide chain from the PKS sdnO to sordarin. Two putative cytochrome P450 monooxygenases, sdnQ and sdnT, might catalyze the epoxidations of the polyketide chain to complete the biosynthesis of hypoxysordarin. Transcriptional regulators sdnM and sdnS are presumably encoded for the transcriptional regulation of the expression of the sdn gene cluster. This is Glycosyltransferase sdnJ from Sordaria araneosa (Pleurage araneosa).